Consider the following 496-residue polypeptide: Serine/threonine-protein kinase Sgk3 (496 aa).

The PX domain occupies S12–H124. The disordered stretch occupies residues S121–A157. Phosphoserine is present on residues S126 and S129. Residues K139–P151 are compositionally biased toward polar residues. One can recognise a Protein kinase domain in the interval F162 to F419. Residues I168–V176 and K191 each bind ATP. Residues K195 to K205 carry the Nuclear localization signal motif. The Proton acceptor role is filled by D286. A Phosphothreonine; by PDPK1 modification is found at T320. Residues E420–L496 enclose the AGC-kinase C-terminal domain. A Phosphoserine modification is found at S486.

It belongs to the protein kinase superfamily. AGC Ser/Thr protein kinase family. As to quaternary structure, interacts with GSK3B and FLII. Interacts with PDPK1 in a phosphorylation-dependent manner. Post-translationally, activated by phosphorylation on Ser-486 by an unknown kinase (may be mTORC2 but not confirmed), transforming it into a substrate for PDPK1 which then phosphorylates it on Thr-320. In terms of tissue distribution, widely expressed, predominantly in the heart, spleen and 7-day embryo.

It is found in the cytoplasmic vesicle. The protein localises to the early endosome. Its subcellular location is the recycling endosome. The catalysed reaction is L-seryl-[protein] + ATP = O-phospho-L-seryl-[protein] + ADP + H(+). It catalyses the reaction L-threonyl-[protein] + ATP = O-phospho-L-threonyl-[protein] + ADP + H(+). With respect to regulation, two specific sites, one in the kinase domain (Thr-320) and the other in the C-terminal regulatory region (Ser-486), need to be phosphorylated for its full activation. Serine/threonine-protein kinase which is involved in the regulation of a wide variety of ion channels, membrane transporters, cell growth, proliferation, survival and migration. Up-regulates Na(+) channels: SCNN1A/ENAC and SCN5A, K(+) channels: KCNA3/KV1.3, KCNE1, KCNQ1 and KCNH2/HERG, epithelial Ca(2+) channels: TRPV5 and TRPV6, chloride channel: BSND, creatine transporter: SLC6A8, Na(+)/dicarboxylate cotransporter: SLC13A2/NADC1, Na(+)-dependent phosphate cotransporter: SLC34A2/NAPI-2B, amino acid transporters: SLC1A5/ASCT2 and SLC6A19, glutamate transporters: SLC1A3/EAAT1, SLC1A6/EAAT4 and SLC1A7/EAAT5, glutamate receptors: GRIA1/GLUR1 and GRIK2/GLUR6, Na(+)/H(+) exchanger: SLC9A3/NHE3, and the Na(+)/K(+) ATPase. Plays a role in the regulation of renal tubular phosphate transport and bone density. Phosphorylates NEDD4L and GSK3B. Positively regulates ER transcription activity through phosphorylation of FLII. Negatively regulates the function of ITCH/AIP4 via its phosphorylation and thereby prevents CXCR4 from being efficiently sorted to lysosomes. The polypeptide is Serine/threonine-protein kinase Sgk3 (Sgk3) (Mus musculus (Mouse)).